The sequence spans 333 residues: Fructose-1,6-bisphosphatase class 1 (333 aa).

Residues E90, D113, L115, and D116 each coordinate Mg(2+). Substrate contacts are provided by residues 116–119, N209, Y242, and K272; that span reads DGSS. Mg(2+) is bound at residue E278.

It belongs to the FBPase class 1 family. In terms of assembly, homotetramer. Mg(2+) is required as a cofactor.

The protein resides in the cytoplasm. It catalyses the reaction beta-D-fructose 1,6-bisphosphate + H2O = beta-D-fructose 6-phosphate + phosphate. It functions in the pathway carbohydrate biosynthesis; gluconeogenesis. This is Fructose-1,6-bisphosphatase class 1 from Pasteurella multocida (strain Pm70).